The sequence spans 229 residues: 7-cyano-7-deazaguanine synthase (229 aa).

14–24 (LSGGQDSTTCL) provides a ligand contact to ATP. Residues Cys192, Cys200, Cys203, and Cys206 each coordinate Zn(2+).

It belongs to the QueC family. Zn(2+) is required as a cofactor.

It carries out the reaction 7-carboxy-7-deazaguanine + NH4(+) + ATP = 7-cyano-7-deazaguanine + ADP + phosphate + H2O + H(+). The protein operates within purine metabolism; 7-cyano-7-deazaguanine biosynthesis. Its function is as follows. Catalyzes the ATP-dependent conversion of 7-carboxy-7-deazaguanine (CDG) to 7-cyano-7-deazaguanine (preQ(0)). In Laribacter hongkongensis (strain HLHK9), this protein is 7-cyano-7-deazaguanine synthase.